A 425-amino-acid polypeptide reads, in one-letter code: 5'-deoxyadenosine deaminase (425 aa).

Zn(2+) is bound by residues H62 and H64. Positions 91 and 183 each coordinate substrate. Residue H210 coordinates Zn(2+). 2 residues coordinate substrate: E213 and D298. D298 is a binding site for Zn(2+).

The protein belongs to the metallo-dependent hydrolases superfamily. MTA/SAH deaminase family. In terms of assembly, homotetramer. The cofactor is Zn(2+).

It catalyses the reaction 5'-deoxyadenosine + H2O + H(+) = 5'-deoxyinosine + NH4(+). It carries out the reaction S-adenosyl-L-homocysteine + H2O + H(+) = S-inosyl-L-homocysteine + NH4(+). The catalysed reaction is S-methyl-5'-thioadenosine + H2O + H(+) = S-methyl-5'-thioinosine + NH4(+). The enzyme catalyses adenosine + H2O + H(+) = inosine + NH4(+). It functions in the pathway amino-acid biosynthesis; S-adenosyl-L-methionine biosynthesis. Catalyzes the deamination of three SAM-derived enzymatic products, namely 5'-deoxyadenosine, S-adenosyl-L-homocysteine, and 5'-methylthioadenosine, to produce the inosine analogs. Can also deaminate adenosine. The preferred substrate for this enzyme is 5'-deoxyadenosine, but all these substrates are efficiently deaminated. Likely functions in a S-adenosyl-L-methionine (SAM) recycling pathway from S-adenosyl-L-homocysteine (SAH) produced from SAM-dependent methylation reactions. May also be involved in the recycling of 5'-deoxyadenosine, whereupon the 5'-deoxyribose moiety of 5'-deoxyinosine is further metabolized to deoxyhexoses used for the biosynthesis of aromatic amino acids in methanogens. The polypeptide is 5'-deoxyadenosine deaminase (Methanosphaera stadtmanae (strain ATCC 43021 / DSM 3091 / JCM 11832 / MCB-3)).